A 209-amino-acid chain; its full sequence is Chaperone protein TorD (209 aa).

The protein belongs to the TorD/DmsD family. TorD subfamily.

The protein resides in the cytoplasm. In terms of biological role, involved in the biogenesis of TorA. Acts on TorA before the insertion of the molybdenum cofactor and, as a result, probably favors a conformation of the apoenzyme that is competent for acquiring the cofactor. The polypeptide is Chaperone protein TorD (Shewanella sp. (strain ANA-3)).